The following is a 429-amino-acid chain: Palmitoyltransferase ZDHHC23 (429 aa).

Residues 1–81 (MKPVKKKKTE…RIPWLRGAKK (81 aa)) lie on the Cytoplasmic side of the membrane. The chain crosses the membrane as a helical span at residues 82 to 102 (VNISILPPLVLLPVLLRVASW). A topological domain (lumenal) is located at residue His103. A helical membrane pass occupies residues 104–124 (FLLGVVVLTSLPMLALWYYYL). Topologically, residues 125 to 130 (THRRKE) are cytoplasmic. The helical transmembrane segment at 131–151 (QTLFFLSLGLFSLGYMYYVFL) threads the bilayer. At 152–159 (QEVVPQGH) the chain is on the lumenal side. A helical transmembrane segment spans residues 160–180 (VGPAQLALLTCGLFLILVALY). The Cytoplasmic segment spans residues 181–296 (RAKKNPGYLS…NSCVGESNHQ (116 aa)). The segment at 212 to 247 (QEKTKGFPGTDTSGSLNNRTLKDDAKGSSRVGLDSP) is disordered. The span at 221 to 230 (TDTSGSLNNR) shows a compositional bias: polar residues. The DHHC domain occupies 253–303 (DWCAKCQLVRPARAWHCRICGICVRRMDHHCVWINSCVGESNHQAFILALS). The active-site S-palmitoyl cysteine intermediate is Cys283. A helical transmembrane segment spans residues 297–317 (AFILALSIFLLTSVYGISLTL). The Lumenal segment spans residues 318–347 (NTICRDRSLFTALFYCPGVYANYSSALSFT). The chain crosses the membrane as a helical span at residues 348–368 (CVWYSVIITAGMAYIFLIQLI). The Cytoplasmic segment spans residues 369-429 (NISYNVTERE…TVHTPAEDIV (61 aa)). Positions 426–429 (EDIV) are interaction with NOS1.

The protein belongs to the DHHC palmitoyltransferase family. As to quaternary structure, interacts with NOS1. Expressed in the brain (at protein level), with highest levels in olfactory bulb, piriform cortex and hippocampus.

It is found in the golgi apparatus membrane. The protein resides in the golgi apparatus. The protein localises to the trans-Golgi network membrane. The catalysed reaction is L-cysteinyl-[protein] + hexadecanoyl-CoA = S-hexadecanoyl-L-cysteinyl-[protein] + CoA. In terms of biological role, palmitoyltransferase that could catalyze the addition of palmitate onto various protein substrates and be involved in a variety of cellular processes. Palmitoyltransferase that mediates palmitoylation of KCNMA1, regulating localization of KCNMA1 to the plasma membrane. May be involved in NOS1 regulation and targeting to the synaptic membrane. The protein is Palmitoyltransferase ZDHHC23 of Rattus norvegicus (Rat).